Reading from the N-terminus, the 393-residue chain is Elongation factor Tu (393 aa).

Residues 10 to 203 (KPHVNIGTIG…AVDEFIPEPL (194 aa)) form the tr-type G domain. The interval 19–26 (GHVDHGKT) is G1. Residue 19-26 (GHVDHGKT) coordinates GTP. Thr-26 serves as a coordination point for Mg(2+). Residues 60 to 64 (GITIS) are G2. A G3 region spans residues 81–84 (DCPG). Residues 81 to 85 (DCPGH) and 136 to 139 (NKVD) each bind GTP. The G4 stretch occupies residues 136–139 (NKVD). The interval 173 to 175 (SAL) is G5.

The protein belongs to the TRAFAC class translation factor GTPase superfamily. Classic translation factor GTPase family. EF-Tu/EF-1A subfamily. In terms of assembly, monomer.

It localises to the cytoplasm. The catalysed reaction is GTP + H2O = GDP + phosphate + H(+). GTP hydrolase that promotes the GTP-dependent binding of aminoacyl-tRNA to the A-site of ribosomes during protein biosynthesis. The sequence is that of Elongation factor Tu from Chlorobium phaeobacteroides (strain DSM 266 / SMG 266 / 2430).